The sequence spans 481 residues: Proline--tRNA ligase (481 aa).

Belongs to the class-II aminoacyl-tRNA synthetase family. ProS type 3 subfamily. As to quaternary structure, homodimer.

Its subcellular location is the cytoplasm. It carries out the reaction tRNA(Pro) + L-proline + ATP = L-prolyl-tRNA(Pro) + AMP + diphosphate. Its function is as follows. Catalyzes the attachment of proline to tRNA(Pro) in a two-step reaction: proline is first activated by ATP to form Pro-AMP and then transferred to the acceptor end of tRNA(Pro). In Chlorobium limicola (strain DSM 245 / NBRC 103803 / 6330), this protein is Proline--tRNA ligase.